Reading from the N-terminus, the 240-residue chain is Ubiquitin domain-containing protein 2 (240 aa).

The interval Met1 to Gly48 is disordered. Over residues Ser12–Gly21 the composition is skewed to polar residues. The span at Leu32–Ser41 shows a compositional bias: basic and acidic residues. The Ubiquitin-like domain maps to Cys152–Thr227.

The protein localises to the cytoplasm. This Danio rerio (Zebrafish) protein is Ubiquitin domain-containing protein 2 (ubtd2).